We begin with the raw amino-acid sequence, 442 residues long: MHPETEQACLVPSSKKTKLCSENFEDKFSSLLESVVSIILSQLPTAEAVSTSVLSKSWKNIWTNITDLHFDDTKQRDPSDSRFTDFVERVVGDIGSPHISSFYLCSVNTFDETLLFSWLSKVLKRNLQRLVVTCNDLEIISFSSLFPSFVSLVELRLRTKSILDISAPAILPNLKFLSLEDARIFNMSSVSKNLVLNFPVLETFEASYCRCFRTDTVIIDSPLLRIFEMFKCTSEHVPNPSQVCKIRVLASKLEKITFCGDEPRKIHLSFPPSLPDAYLALSRSEWPKTFLRSFTCVTSLALVLSKDFHVMAVPKFSQLVYLHLIYDMTQHFRLMQFLKSAPILEMLSIRDLTSPRSTPTAKSLKELRSVESPDCVTTMLKVLQIRNFKPNRLQISVLRYVLDNAEILGSVILSSPNPITEEEKARILAFPKASPHASVLFE.

Residues 26–73 form the F-box domain; sequence DKFSSLLESVVSIILSQLPTAEAVSTSVLSKSWKNIWTNITDLHFDDT. LRR repeat units lie at residues 126 to 147, 151 to 172, and 173 to 194; these read NLQR…SLFP, SLVE…AILP, and NLKF…SKNL. One can recognise an FBD domain in the interval 370–414; sequence VESPDCVTTMLKVLQIRNFKPNRLQISVLRYVLDNAEILGSVILS.

In Arabidopsis thaliana (Mouse-ear cress), this protein is F-box/FBD/LRR-repeat protein At3g14710.